We begin with the raw amino-acid sequence, 120 residues long: NAD(P)H-quinone oxidoreductase subunit 3, chloroplastic (120 aa).

3 consecutive transmembrane segments (helical) span residues 9–29, 64–84, and 88–108; these read IFWA…LISG, MFAL…PWAM, and VLGV…ILGL.

The protein belongs to the complex I subunit 3 family. As to quaternary structure, NDH is composed of at least 16 different subunits, 5 of which are encoded in the nucleus.

Its subcellular location is the plastid. It localises to the chloroplast thylakoid membrane. It carries out the reaction a plastoquinone + NADH + (n+1) H(+)(in) = a plastoquinol + NAD(+) + n H(+)(out). The catalysed reaction is a plastoquinone + NADPH + (n+1) H(+)(in) = a plastoquinol + NADP(+) + n H(+)(out). Its function is as follows. NDH shuttles electrons from NAD(P)H:plastoquinone, via FMN and iron-sulfur (Fe-S) centers, to quinones in the photosynthetic chain and possibly in a chloroplast respiratory chain. The immediate electron acceptor for the enzyme in this species is believed to be plastoquinone. Couples the redox reaction to proton translocation, and thus conserves the redox energy in a proton gradient. The sequence is that of NAD(P)H-quinone oxidoreductase subunit 3, chloroplastic from Aethionema grandiflorum (Persian stone-cress).